A 380-amino-acid polypeptide reads, in one-letter code: L-lactate dehydrogenase (380 aa).

The FMN hydroxy acid dehydrogenase domain maps to 1–380 (MIISASTDYR…SADSLVQGLR (380 aa)). Residue Y24 participates in substrate binding. 2 residues coordinate FMN: S106 and Q127. Y129 is a substrate binding site. T155 serves as a coordination point for FMN. R164 is a binding site for substrate. Position 251 (K251) interacts with FMN. H275 acts as the Proton acceptor in catalysis. R278 provides a ligand contact to substrate. FMN is bound at residue 306 to 330 (DSGIRSGLDVVRMIALGADGVLLGR).

This sequence belongs to the FMN-dependent alpha-hydroxy acid dehydrogenase family. FMN is required as a cofactor.

The protein localises to the cell inner membrane. The enzyme catalyses (S)-lactate + A = pyruvate + AH2. Functionally, catalyzes the conversion of L-lactate to pyruvate. Is coupled to the respiratory chain. The sequence is that of L-lactate dehydrogenase from Serratia proteamaculans (strain 568).